The chain runs to 79 residues: Cytochrome c oxidase assembly factor 6 homolog (79 aa).

Residues 9-52 (RQACWGARDEYWKCLDENTEDASKCKKLRSSFESSCPQQWIKYF) enclose the CHCH domain. The Cx9C motif signature appears at 12-22 (CWGARDEYWKC). Disulfide bonds link cysteine 12–cysteine 44 and cysteine 22–cysteine 33. The Cx10C motif motif lies at 33–44 (CKKLRSSFESSC).

Belongs to the cytochrome c oxidase subunit 6B family. Found in a complex with TMEM177, COX20, MT-CO2/COX2, COX18, SCO1 and SCO2. Interacts with COA1, MT-CO2/COX2, SCO1, SCO2 and COX20. Interacts with COX20 in a MT-CO2/COX2- and COX18-dependent manner. Interacts with COX16.

The protein localises to the mitochondrion intermembrane space. Its function is as follows. Involved in the maturation of the mitochondrial respiratory chain complex IV subunit MT-CO2/COX2. Thereby, may regulate early steps of complex IV assembly. Mitochondrial respiratory chain complex IV or cytochrome c oxidase is the component of the respiratory chain that catalyzes the transfer of electrons from intermembrane space cytochrome c to molecular oxygen in the matrix and as a consequence contributes to the proton gradient involved in mitochondrial ATP synthesis. May also be required for efficient formation of respiratory supercomplexes comprised of complexes III and IV. In Bos taurus (Bovine), this protein is Cytochrome c oxidase assembly factor 6 homolog (COA6).